A 121-amino-acid polypeptide reads, in one-letter code: Basic phospholipase A2 homolog piratoxin-1 (121 aa).

7 disulfide bridges follow: cysteine 26–cysteine 115, cysteine 28–cysteine 44, cysteine 43–cysteine 95, cysteine 49–cysteine 121, cysteine 50–cysteine 88, cysteine 57–cysteine 81, and cysteine 75–cysteine 86. Residues 105-117 (KLYRYHLKPFCKK) form an important for membrane-damaging activities in eukaryotes and bacteria; heparin-binding region.

Belongs to the phospholipase A2 family. Group II subfamily. K49 sub-subfamily. Homodimer; non-covalently linked. In terms of tissue distribution, expressed by the venom gland.

Its subcellular location is the secreted. Its activity is regulated as follows. Rosmarinic acid inhibits the myotoxic activity. Bromophenacyl bromide (BPB) inhibits the myotoxic activity through a covalent binding. Caffeic acid and aristolochic acid, two plant compounds used in folk medicine used to treat envenomation, inhibit the myotoxic activity. Snake venom phospholipase A2 (PLA2) homolog that lacks enzymatic activity. Is myotoxic and displays edema-inducing activities. Induces neuromuscular blockage. A model of myotoxic mechanism has been proposed: an apo Lys49-PLA2 is activated by the entrance of a hydrophobic molecule (e.g. fatty acid) at the hydrophobic channel of the protein leading to a reorientation of a monomer. This reorientation causes a transition between 'inactive' to 'active' states, causing alignment of C-terminal and membrane-docking sites (MDoS) side-by-side and putting the membrane-disruption sites (MDiS) in the same plane, exposed to solvent and in a symmetric position for both monomers. The MDoS region stabilizes the toxin on membrane by the interaction of charged residues with phospholipid head groups. Subsequently, the MDiS region destabilizes the membrane with penetration of hydrophobic residues. This insertion causes a disorganization of the membrane, allowing an uncontrolled influx of ions (i.e. calcium and sodium), and eventually triggering irreversible intracellular alterations and cell death. This is Basic phospholipase A2 homolog piratoxin-1 from Bothrops pirajai (Piraja's lancehead).